Consider the following 419-residue polypeptide: Serine hydroxymethyltransferase (419 aa).

Residues Leu118 and 122–124 contribute to the (6S)-5,6,7,8-tetrahydrofolate site; that span reads GHL. Lys226 carries the post-translational modification N6-(pyridoxal phosphate)lysine. A (6S)-5,6,7,8-tetrahydrofolate-binding site is contributed by Glu242.

Belongs to the SHMT family. Homodimer. The cofactor is pyridoxal 5'-phosphate.

It localises to the cytoplasm. It catalyses the reaction (6R)-5,10-methylene-5,6,7,8-tetrahydrofolate + glycine + H2O = (6S)-5,6,7,8-tetrahydrofolate + L-serine. The protein operates within one-carbon metabolism; tetrahydrofolate interconversion. Its pathway is amino-acid biosynthesis; glycine biosynthesis; glycine from L-serine: step 1/1. Functionally, catalyzes the reversible interconversion of serine and glycine with tetrahydrofolate (THF) serving as the one-carbon carrier. This reaction serves as the major source of one-carbon groups required for the biosynthesis of purines, thymidylate, methionine, and other important biomolecules. Also exhibits THF-independent aldolase activity toward beta-hydroxyamino acids, producing glycine and aldehydes, via a retro-aldol mechanism. This chain is Serine hydroxymethyltransferase, found in Metamycoplasma arthritidis (strain 158L3-1) (Mycoplasma arthritidis).